Here is a 295-residue protein sequence, read N- to C-terminus: Aspartate carbamoyltransferase catalytic subunit (295 aa).

Carbamoyl phosphate-binding residues include Arg-49 and Thr-50. Lys-77 provides a ligand contact to L-aspartate. Carbamoyl phosphate contacts are provided by Arg-99, His-127, and Gln-130. 2 residues coordinate L-aspartate: Arg-161 and Arg-212. Residues Gly-251 and Pro-252 each contribute to the carbamoyl phosphate site.

It belongs to the aspartate/ornithine carbamoyltransferase superfamily. ATCase family. In terms of assembly, heterododecamer (2C3:3R2) of six catalytic PyrB chains organized as two trimers (C3), and six regulatory PyrI chains organized as three dimers (R2).

It catalyses the reaction carbamoyl phosphate + L-aspartate = N-carbamoyl-L-aspartate + phosphate + H(+). The protein operates within pyrimidine metabolism; UMP biosynthesis via de novo pathway; (S)-dihydroorotate from bicarbonate: step 2/3. Catalyzes the condensation of carbamoyl phosphate and aspartate to form carbamoyl aspartate and inorganic phosphate, the committed step in the de novo pyrimidine nucleotide biosynthesis pathway. This is Aspartate carbamoyltransferase catalytic subunit from Campylobacter jejuni subsp. jejuni serotype O:6 (strain 81116 / NCTC 11828).